Reading from the N-terminus, the 476-residue chain is Glutamate--tRNA ligase (476 aa).

Positions 9–19 match the 'HIGH' region motif; the sequence is PSPTGTLHIGT. Positions 248-252 match the 'KMSKS' region motif; that stretch reads KLSKR. Residue lysine 251 coordinates ATP.

Belongs to the class-I aminoacyl-tRNA synthetase family. Glutamate--tRNA ligase type 1 subfamily. As to quaternary structure, monomer.

The protein resides in the cytoplasm. It carries out the reaction tRNA(Glu) + L-glutamate + ATP = L-glutamyl-tRNA(Glu) + AMP + diphosphate. In terms of biological role, catalyzes the attachment of glutamate to tRNA(Glu) in a two-step reaction: glutamate is first activated by ATP to form Glu-AMP and then transferred to the acceptor end of tRNA(Glu). The protein is Glutamate--tRNA ligase of Prochlorococcus marinus (strain MIT 9303).